A 201-amino-acid chain; its full sequence is Translation machinery-associated protein 22 (201 aa).

Positions 104 to 175 (VTVKRIERNK…EIKEFIVEKY (72 aa)) constitute an SUI1 domain.

This sequence belongs to the DENR family. As to quaternary structure, interacts with the 40S ribosomal subunit.

Its subcellular location is the cytoplasm. The polypeptide is Translation machinery-associated protein 22 (TMA22) (Pyricularia oryzae (strain 70-15 / ATCC MYA-4617 / FGSC 8958) (Rice blast fungus)).